The following is a 163-amino-acid chain: Putative pre-16S rRNA nuclease (163 aa).

The protein belongs to the YqgF nuclease family.

The protein resides in the cytoplasm. Could be a nuclease involved in processing of the 5'-end of pre-16S rRNA. This Rhodopseudomonas palustris (strain BisB18) protein is Putative pre-16S rRNA nuclease.